Reading from the N-terminus, the 1162-residue chain is Glycerophosphocholine phosphodiesterase GDE1 (1162 aa).

The 155-residue stretch at 1–155 (MKFGKTYVTH…TSILSQHSGV (155 aa)) folds into the SPX domain. ANK repeat units follow at residues 346–375 (YHRTPLHYASQYGLVEVTRYLVEFGVKWGL), 392–421 (EGLTPLHLSIIGKHPKTTETLLGFNKAQTL), 423–452 (CPNLLLLAVRLNSPQILNSLIVEGNIDVNY), 458–487 (RNETALYIASKLNHPDLVEFLLESNANTEI), 492–521 (FGWTPIFIAASEGFMTIVKLLKEYGASYDI), and 525–554 (SGWLPMEHACLRGHLDVTDLLLPKNEKLLL). Residues 817–1146 (TRVIGHRGLG…DSVLAVREGL (330 aa)) form the GP-PDE domain.

It belongs to the GDE1 family.

It is found in the cytoplasm. The catalysed reaction is sn-glycerol 3-phosphocholine + H2O = sn-glycerol 3-phosphate + choline + H(+). In terms of biological role, glycerophosphocholine glycerophosphodiesterase responsible for the hydrolysis of intracellular glycerophosphocholine into glycerol-phosphate and choline. The choline is used for phosphatidyl-choline synthesis. Required for utilization of glycerophosphocholine as phosphate source. C.albicans can utilize GroPCho through transport and intracellular hydrolysis or through extracellular hydrolysis. This is Glycerophosphocholine phosphodiesterase GDE1 from Candida albicans (strain SC5314 / ATCC MYA-2876) (Yeast).